Here is a 411-residue protein sequence, read N- to C-terminus: Translation initiation factor 2 subunit gamma (411 aa).

One can recognise a tr-type G domain in the interval 9-203 (QAEVNIGMVG…AIQDFIPTPK (195 aa)). Positions 18–25 (GHVDHGKT) are G1. Residues Asp-21, Thr-25, Gly-46, and Ser-48 each coordinate Mg(2+). Position 21–26 (21–26 (DHGKTS)) interacts with GTP. The segment at 46 to 50 (GISIR) is G2. Cys-61, Cys-64, Cys-73, and Cys-76 together coordinate Zn(2+). A G3 region spans residues 90–93 (DSPG). Residues 146–149 (NKID) and 181–183 (SAH) each bind GTP. The tract at residues 146–149 (NKID) is G4. The interval 181–183 (SAH) is G5.

It belongs to the TRAFAC class translation factor GTPase superfamily. Classic translation factor GTPase family. EIF2G subfamily. As to quaternary structure, heterotrimer composed of an alpha, a beta and a gamma chain. The cofactor is Mg(2+).

The enzyme catalyses GTP + H2O = GDP + phosphate + H(+). In terms of biological role, eIF-2 functions in the early steps of protein synthesis by forming a ternary complex with GTP and initiator tRNA. The polypeptide is Translation initiation factor 2 subunit gamma (Methanocaldococcus jannaschii (strain ATCC 43067 / DSM 2661 / JAL-1 / JCM 10045 / NBRC 100440) (Methanococcus jannaschii)).